The following is a 387-amino-acid chain: Probable peptidoglycan glycosyltransferase FtsW (387 aa).

9 helical membrane passes run 19-39 (LDFS…VMVA), 61-81 (ITFL…PMSV), 86-106 (SGLL…PGIG), 118-138 (LGPF…VYFA), 161-181 (VLLI…SVVI), 199-219 (FLLL…ASPY), 286-306 (FIGA…LVIL), 320-340 (YVVF…MGVA), and 352-372 (PFIS…ALVF).

Belongs to the SEDS family. FtsW subfamily.

The protein localises to the cell inner membrane. It catalyses the reaction [GlcNAc-(1-&gt;4)-Mur2Ac(oyl-L-Ala-gamma-D-Glu-L-Lys-D-Ala-D-Ala)](n)-di-trans,octa-cis-undecaprenyl diphosphate + beta-D-GlcNAc-(1-&gt;4)-Mur2Ac(oyl-L-Ala-gamma-D-Glu-L-Lys-D-Ala-D-Ala)-di-trans,octa-cis-undecaprenyl diphosphate = [GlcNAc-(1-&gt;4)-Mur2Ac(oyl-L-Ala-gamma-D-Glu-L-Lys-D-Ala-D-Ala)](n+1)-di-trans,octa-cis-undecaprenyl diphosphate + di-trans,octa-cis-undecaprenyl diphosphate + H(+). It functions in the pathway cell wall biogenesis; peptidoglycan biosynthesis. Its function is as follows. Peptidoglycan polymerase that is essential for cell division. This is Probable peptidoglycan glycosyltransferase FtsW from Saccharophagus degradans (strain 2-40 / ATCC 43961 / DSM 17024).